The primary structure comprises 470 residues: Heparan-sulfate 6-O-sulfotransferase 3 (470 aa).

The Cytoplasmic segment spans residues 1–4; sequence MDER. The helical; Signal-anchor for type II membrane protein transmembrane segment at 5-27 threads the bilayer; sequence FNKWLLTPVLTLLFVVIMYQYVS. The Lumenal portion of the chain corresponds to 28-470; that stretch reads PSCTSSCTNF…EDYNSQVVRW (443 aa). Positions 36-121 are disordered; it reads NFGEQLRSGE…EAPENGSLPR (86 aa). The segment covering 88 to 113 has biased composition (acidic residues); it reads PEDEDEDPGDPEEEEEEEEEEPDPEA. Asn116 and Asn127 each carry an N-linked (GlcNAc...) asparagine glycan. 151-159 is a 3'-phosphoadenylyl sulfate binding site; it reads HIQKTGGTT. Substrate-binding positions include 181 to 182, Arg198, Trp203, and His208; that span reads KK. The Proton acceptor role is filled by His208. Asn230 is a glycosylation site (N-linked (GlcNAc...) asparagine). Arg244 and Ser252 together coordinate 3'-phosphoadenylyl sulfate. Residues His256 and Trp263 each contribute to the substrate site. 2 N-linked (GlcNAc...) asparagine glycosylation sites follow: Asn323 and Asn328. Position 376–378 (376–378) interacts with 3'-phosphoadenylyl sulfate; sequence TQF. Asn379 carries N-linked (GlcNAc...) asparagine glycosylation. 382–383 lines the 3'-phosphoadenylyl sulfate pocket; that stretch reads RA. Residues 421 to 453 form a disordered region; the sequence is TKQLEHQRDRQKRREERRLQREHRAHRWPKEDR. The segment covering 422-439 has biased composition (basic and acidic residues); that stretch reads KQLEHQRDRQKRREERRL.

The protein belongs to the sulfotransferase 6 family. As to expression, ubiquitously expressed.

Its subcellular location is the membrane. The catalysed reaction is alpha-D-glucosaminyl-[heparan sulfate](n) + 3'-phosphoadenylyl sulfate = 6-sulfo-alpha-D-glucosaminyl-[heparan sulfate](n) + adenosine 3',5'-bisphosphate + H(+). 6-O-sulfation enzyme which catalyzes the transfer of sulfate from 3'-phosphoadenosine 5'-phosphosulfate (PAPS) to position 6 of the N-sulfoglucosamine residue (GlcNS) of heparan sulfate. This is Heparan-sulfate 6-O-sulfotransferase 3 (Hs6st3) from Mus musculus (Mouse).